A 146-amino-acid polypeptide reads, in one-letter code: Large ribosomal subunit protein uL15 (146 aa).

The segment at 1-58 is disordered; it reads MNLSNLRAPKKANRNRKRVGRGMGSGHGKTSTRGHKGQRSRSGSRSMRGFEGGQMPLH. Basic residues-rich tracts occupy residues 8-20 and 30-39; these read APKKANRNRKRVG and TSTRGHKGQR. Residues 40 to 49 show a composition bias toward low complexity; the sequence is SRSGSRSMRG.

Belongs to the universal ribosomal protein uL15 family. Part of the 50S ribosomal subunit.

Functionally, binds to the 23S rRNA. This Acidobacterium capsulatum (strain ATCC 51196 / DSM 11244 / BCRC 80197 / JCM 7670 / NBRC 15755 / NCIMB 13165 / 161) protein is Large ribosomal subunit protein uL15.